The chain runs to 193 residues: MARLIYLMGPSGAGKDCLLSALRNATPQNRVVAHRYITRPADAGAENHVALSKQEFIQRAEQGLFALHWQAHQHCYAIGIEINLWLQHGLDVLVNGSRAYLPEAQRRYRHQLLPLCLTVSPAILAQRLRQRGRENSEQIDARLQRAQHYQQQLPSHCLQLCNDGELQHTLNQLQQLLTLDTPLSDPVEDKPCN.

9-16 is a binding site for ATP; sequence GPSGAGKD.

This sequence belongs to the ribose 1,5-bisphosphokinase family.

The enzyme catalyses alpha-D-ribose 1,5-bisphosphate + ATP = 5-phospho-alpha-D-ribose 1-diphosphate + ADP. It participates in metabolic intermediate biosynthesis; 5-phospho-alpha-D-ribose 1-diphosphate biosynthesis; 5-phospho-alpha-D-ribose 1-diphosphate from D-ribose 5-phosphate (route II): step 3/3. Catalyzes the phosphorylation of ribose 1,5-bisphosphate to 5-phospho-D-ribosyl alpha-1-diphosphate (PRPP). The polypeptide is Ribose 1,5-bisphosphate phosphokinase PhnN (Yersinia pestis).